Reading from the N-terminus, the 100-residue chain is uncharacterized protein (100 aa).

A compositionally biased stretch (basic and acidic residues) spans 68-91; it reads EQYASGAGEKRKEQSSGNSRRKDP. Positions 68–100 are disordered; that stretch reads EQYASGAGEKRKEQSSGNSRRKDPSLYNWSDVK.

This sequence belongs to the chlamydial CPn_0121/CT_031/TC_0300 family.

This is an uncharacterized protein from Chlamydia muridarum (strain MoPn / Nigg).